The sequence spans 142 residues: Organic hydroperoxide resistance protein-like 2 (142 aa).

Belongs to the OsmC/Ohr family.

The chain is Organic hydroperoxide resistance protein-like 2 from Staphylococcus saprophyticus subsp. saprophyticus (strain ATCC 15305 / DSM 20229 / NCIMB 8711 / NCTC 7292 / S-41).